The sequence spans 293 residues: uncharacterized protein (293 aa).

Active-site charge relay system residues include Thr-43 and Tyr-105. Tyr-131 functions as the Proton donor in the catalytic mechanism. Lys-159 serves as the catalytic Schiff-base intermediate with substrate.

It belongs to the DapA family. As to quaternary structure, homotetramer.

The protein localises to the cytoplasm. This is an uncharacterized protein from Thermococcus onnurineus (strain NA1).